A 940-amino-acid chain; its full sequence is UvrABC system protein A (940 aa).

31–38 is a binding site for ATP; the sequence is GLSGSGKS. The C4-type zinc finger occupies 253 to 280; it reads CPICGYSMRELEPRLFSFNNPAGACPTC. ABC transporter domains follow at residues 310–587 and 607–937; these read WDRR…PESL and ANPE…RFLK. Residue 640–647 participates in ATP binding; the sequence is GVSGSGKS. The segment at 740–766 adopts a C4-type zinc-finger fold; that stretch reads CEACQGDGVIKVEMHFLPDIYVPCDQC.

Belongs to the ABC transporter superfamily. UvrA family. Forms a heterotetramer with UvrB during the search for lesions.

It is found in the cytoplasm. In terms of biological role, the UvrABC repair system catalyzes the recognition and processing of DNA lesions. UvrA is an ATPase and a DNA-binding protein. A damage recognition complex composed of 2 UvrA and 2 UvrB subunits scans DNA for abnormalities. When the presence of a lesion has been verified by UvrB, the UvrA molecules dissociate. This is UvrABC system protein A from Escherichia coli O6:H1 (strain CFT073 / ATCC 700928 / UPEC).